Here is a 399-residue protein sequence, read N- to C-terminus: Forkhead box protein I3 (399 aa).

Disordered regions lie at residues 87 to 109 (AGAQRGFAQPSASAPASPAGSAA), 221 to 287 (KRRR…ASTL), and 307 to 353 (SSSS…STVG). The segment covering 96–109 (PSASAPASPAGSAA) has biased composition (low complexity). Serine 99 and serine 103 each carry phosphoserine. Residues 129–223 (RPPYSYSALI…DNGNFRRKRR (95 aa)) constitute a DNA-binding region (fork-head). A Nuclear localization signal motif is present at residues 219-225 (RRKRRRR). Polar residues-rich tracts occupy residues 228 to 248 (ASSNLTVPSGTSKSEGQSSRL) and 258 to 267 (SPSSILRPSQ). Phosphoserine is present on residues serine 258, serine 266, and serine 268. 3 stretches are compositionally biased toward polar residues: residues 275–287 (TKSTASSPGASTL), 307–317 (SSSSMGNQRTL), and 328–353 (QLPSSTFPNTSVPDSSPDSMQLSTVG). The 9aaTAD motif lies at 385–393 (SMVNSLIYP).

Phosphorylation promotes the transcription factor activity. Dephosphorylation by protein phosphatase 2A (PP2A) reduces its activity. In terms of tissue distribution, specifically expressed in the epithelium in developing ectodermal appendages. Expressed in pharyngeal endoderm and ectoderm. Expressed in pre-placodal ectoderm. Down-regulated as the otic placode is induced. Expressed in teeth and hair follicles throughout embryogenesis. Expressed in mammary glands only during the earliest stages of development.

It localises to the nucleus. Transcription factor required for pharyngeal arch development, which is involved in hair, ear, jaw and dental development. May act as a pioneer transcription factor during pharyngeal arch development. Required for epithelial cell differentiation within the epidermis. Acts at multiple stages of otic placode induction: necessary for preplacodal ectoderm to execute an inner ear program. Required for hair follicle stem cell specification. Acts downstream of TBX1 for the formation of the thymus and parathyroid glands from the third pharyngeal pouch. This chain is Forkhead box protein I3, found in Mus musculus (Mouse).